A 561-amino-acid polypeptide reads, in one-letter code: Dihydroxy-acid dehydratase (561 aa).

Residue Cys50 participates in [2Fe-2S] cluster binding. Asp82 provides a ligand contact to Mg(2+). Cys123 lines the [2Fe-2S] cluster pocket. Positions 124 and 125 each coordinate Mg(2+). Lys125 is subject to N6-carboxylysine. Cys195 serves as a coordination point for [2Fe-2S] cluster. Glu447 serves as a coordination point for Mg(2+). The active-site Proton acceptor is the Ser473.

It belongs to the IlvD/Edd family. In terms of assembly, homodimer. Requires [2Fe-2S] cluster as cofactor. Mg(2+) serves as cofactor.

It catalyses the reaction (2R)-2,3-dihydroxy-3-methylbutanoate = 3-methyl-2-oxobutanoate + H2O. The catalysed reaction is (2R,3R)-2,3-dihydroxy-3-methylpentanoate = (S)-3-methyl-2-oxopentanoate + H2O. It participates in amino-acid biosynthesis; L-isoleucine biosynthesis; L-isoleucine from 2-oxobutanoate: step 3/4. The protein operates within amino-acid biosynthesis; L-valine biosynthesis; L-valine from pyruvate: step 3/4. Functionally, functions in the biosynthesis of branched-chain amino acids. Catalyzes the dehydration of (2R,3R)-2,3-dihydroxy-3-methylpentanoate (2,3-dihydroxy-3-methylvalerate) into 2-oxo-3-methylpentanoate (2-oxo-3-methylvalerate) and of (2R)-2,3-dihydroxy-3-methylbutanoate (2,3-dihydroxyisovalerate) into 2-oxo-3-methylbutanoate (2-oxoisovalerate), the penultimate precursor to L-isoleucine and L-valine, respectively. The protein is Dihydroxy-acid dehydratase of Trichodesmium erythraeum (strain IMS101).